We begin with the raw amino-acid sequence, 147 residues long: Hemoglobin subunit beta (147 aa).

The residue at position 2 (valine 2) is an N-acetylvaline. Positions 3-147 (HLTPEEKNAV…VANALAHKYH (145 aa)) constitute a Globin domain. Residue threonine 13 is modified to Phosphothreonine. Serine 45 is modified (phosphoserine). Lysine 60 carries the N6-acetyllysine modification. Heme b is bound at residue histidine 64. Lysine 83 bears the N6-acetyllysine mark. Position 93 (histidine 93) interacts with heme b. The residue at position 94 (cysteine 94) is an S-nitrosocysteine. Lysine 145 bears the N6-acetyllysine mark.

It belongs to the globin family. Heterotetramer of two alpha chains and two beta chains. In terms of tissue distribution, red blood cells.

Functionally, involved in oxygen transport from the lung to the various peripheral tissues. In Macaca fascicularis (Crab-eating macaque), this protein is Hemoglobin subunit beta (HBB).